Reading from the N-terminus, the 810-residue chain is Cation/H(+) antiporter 18 (810 aa).

12 helical membrane passes run 29–49 (FALPLAILQIVIVIVLTRVLA), 59–76 (RVIAEVIGGIMLGPSLLG), 91–111 (LTVLETLANLGLLFFLFLAGL), 126–146 (LGIALAGITLPFALGIGSSFV), 157–177 (STAFLVFMGVALSITAFPVLA), 193–213 (LAMSAAAVNDVAAWILLALAI), 223–243 (LVSLWVFLSGCAFVIGASFII), 277–297 (FITDAIGIHSMFGAFVVGVLI), 314–334 (LVSGLFLPLYFVASGLKTNVA), 343–363 (GLLVLVTATACFGKILGTLGV), 374–394 (AITLGFLMNTKGLVELIVLNI), and 406–426 (FAIMVLMALFTTFITTPVVMA). Serine 804 carries the post-translational modification Phosphoserine.

This sequence belongs to the monovalent cation:proton antiporter 2 (CPA2) transporter (TC 2.A.37) family. CHX (TC 2.A.37.4) subfamily. In terms of tissue distribution, expressed in roots.

It localises to the membrane. In terms of biological role, may operate as a cation/H(+) antiporter. The chain is Cation/H(+) antiporter 18 (CHX18) from Arabidopsis thaliana (Mouse-ear cress).